Here is a 582-residue protein sequence, read N- to C-terminus: Guanine nucleotide-binding protein-like NSN1 (582 aa).

Residues 1–46 (MVKRSKKSKSKRVTLKQKHKVLKKVKEHHKKKAKDAKKLGLHRKPR) show a composition bias toward basic residues. The interval 1 to 58 (MVKRSKKSKSKRVTLKQKHKVLKKVKEHHKKKAKDAKKLGLHRKPRVEKDPGIPNDWP) is disordered. The tract at residues 2-49 (VKRSKKSKSKRVTLKQKHKVLKKVKEHHKKKAKDAKKLGLHRKPRVEK) is basic. 3 consecutive short sequence motifs (nuclear localization signal) follow at residues 5 to 12 (SKKSKSKR), 22 to 29 (LKKVKEHH), and 69 to 76 (VRRARALE). Residues 15-94 (LKQKHKVLKK…RKERAKKRKL (80 aa)) are a coiled coil. The region spanning 127-311 (YKELVKVIEL…LLDCPGVVML (185 aa)) is the CP-type G domain. Residues 145 to 149 (DARDP) carry the DARXP motif motif. A G4 region spans residues 175–178 (NKID). 175 to 178 (NKID) serves as a coordination point for GTP. A G5 region spans residues 202 to 204 (KCS). Positions 260–267 (GLPNVGKS) are G1. Residue 263–268 (NVGKSS) coordinates GTP. Residues 281–456 (VGATPGLTRS…NEFNPVIIPS (176 aa)) form an intermediate region. Positions 286-290 (GLTRS) are G2. GTP contacts are provided by residues 304–307 (DCPG) and Gly307. The segment at 304 to 307 (DCPG) is G3. The tract at residues 463 to 551 (DETMIEDESK…EEDLMDGDYD (89 aa)) is acidic. Positions 469 to 545 (DESKTQTEEE…KKAGADEEDL (77 aa)) are disordered. Positions 476-496 (EEEAEHESDDDESMGGEEEEE) are enriched in acidic residues. Residues 497-506 (AGKTKEKSET) show a composition bias toward basic and acidic residues. Residues 515 to 537 (AAESMLNTKKQKAEKKKRKKAKK) are a coiled coil. A Nuclear localization signal 4 motif is present at residues 522–529 (TKKQKAEK). The span at 523-537 (KKQKAEKKKRKKAKK) shows a compositional bias: basic residues.

It belongs to the TRAFAC class YlqF/YawG GTPase family. Interacts with EBP2 and PES. As to expression, mostly expressed in flowers, siliques and inflorescence apex, and, to a lower extent, in stems and leaves.

Its subcellular location is the nucleus. The protein localises to the nucleolus. In terms of biological role, involved in the differentiation of epidermal cells, probably via the regulation of the expression of meristem-related genes (e.g. CLV3, STM, KNAT1, CUC2 and AG) and of leaf polarity-related genes (e.g. YAB5, FIL, AS2, PHB and PHV). May play a role in regulating cellular proliferation. Necessary for flower development, probably by preventing apical dominance through the down-regulation of AG expression. Required for embryogenesis, leaf and cotyledon development, as well as for leaf polarity establishment. Plays an important role in plant growth and senescence by modulating ribosome biogenesis in nucleolus. Possesses GTPAse activity in vitro. Possesses RNA binding activity in vitro. Associates with ribosomes. The sequence is that of Guanine nucleotide-binding protein-like NSN1 from Arabidopsis thaliana (Mouse-ear cress).